Here is a 150-residue protein sequence, read N- to C-terminus: Large ribosomal subunit protein bL9 (150 aa).

This sequence belongs to the bacterial ribosomal protein bL9 family.

Binds to the 23S rRNA. In Paraburkholderia phytofirmans (strain DSM 17436 / LMG 22146 / PsJN) (Burkholderia phytofirmans), this protein is Large ribosomal subunit protein bL9.